Here is a 325-residue protein sequence, read N- to C-terminus: Dehydrogenase/reductase SDR family member 7B (325 aa).

Topologically, residues 1–17 (MVSAATRKSLLRARVMD) are cytoplasmic. The helical; Signal-anchor for type II membrane protein transmembrane segment at 18–38 (FITSTAILPLLLGCVGLFSLF) threads the bilayer. At 39–325 (KLLQWLRMRA…ARKERKSKHS (287 aa)) the chain is on the lumenal side. NAD(+) contacts are provided by Ser62 and Leu64. Substrate is bound at residue Ser194. The NAD(+) site is built by Tyr207, Lys211, and Thr242. Catalysis depends on Tyr207, which acts as the Proton acceptor.

This sequence belongs to the short-chain dehydrogenases/reductases (SDR) family.

The protein resides in the endoplasmic reticulum membrane. Putative oxidoreductase. The chain is Dehydrogenase/reductase SDR family member 7B (DHRS7B) from Bos taurus (Bovine).